The primary structure comprises 56 residues: uncharacterized protein (56 aa).

This is an uncharacterized protein from Acheta domesticus (House cricket).